A 299-amino-acid chain; its full sequence is Leucine zipper transcription factor-like protein 1 (299 aa).

Residues 145–299 (GTTELLNKEI…KRLAKYESED (155 aa)) form an interaction with BSS9 region. The stretch at 145–299 (GTTELLNKEI…KRLAKYESED (155 aa)) forms a coiled coil.

Belongs to the LZTFL1 family. In terms of assembly, self-associates. Interacts with BBS9; the interaction mediates the association of LZTL1 with the BBsome complex and regulates BBSome ciliary trafficking.

The protein localises to the cytoplasm. Its function is as follows. Regulates ciliary localization of the BBSome complex. Together with the BBSome complex, controls SMO ciliary trafficking and contributes to the sonic hedgehog (SHH) pathway regulation. May play a role in neurite outgrowth. May have tumor suppressor function. This Rattus norvegicus (Rat) protein is Leucine zipper transcription factor-like protein 1 (Lztfl1).